Consider the following 67-residue polypeptide: Conotoxin TxMMSK-01 (67 aa).

Residues 1-20 (MMSKLGVLLITCLLLFPLTA) form the signal peptide. Residues 21 to 53 (VPLDGDQPADQPAERLQDDISSENHPFFDPVKR) constitute a propeptide that is removed on maturation. Cystine bridges form between cysteine 54–cysteine 66, cysteine 55–cysteine 62, and cysteine 59–cysteine 65. Proline 64 is subject to 4-hydroxyproline. Cysteine 66 is subject to Cysteine amide.

The protein belongs to the conotoxin M superfamily. In terms of tissue distribution, expressed by the venom duct.

The protein resides in the secreted. This is Conotoxin TxMMSK-01 from Conus textile (Cloth-of-gold cone).